We begin with the raw amino-acid sequence, 167 residues long: Urease accessory protein UreE (167 aa).

The tract at residues Ser-135–Gln-167 is disordered. The segment covering Lys-157–Gln-167 has biased composition (basic residues).

It belongs to the UreE family.

Its subcellular location is the cytoplasm. Functionally, involved in urease metallocenter assembly. Binds nickel. Probably functions as a nickel donor during metallocenter assembly. This is Urease accessory protein UreE from Nitrosococcus oceani (strain ATCC 19707 / BCRC 17464 / JCM 30415 / NCIMB 11848 / C-107).